The sequence spans 320 residues: MVGKSVVTLDGLSTNQILDLLHKAEYIDSHRKEIAHTCDGRVLATLFYEPSTRTRLSFETAMLRLGGKVIGFAGAQLASVTKGESIADTLKTVSNYVDVVAIRHPKEGAALVASRAASVPVINAGDGGHMHPTQTLADLATLQSRFGRITDLTVGLCGDLTFGRTVHSLIETLCRFGNVRFVLISPDELKTPQYVIDRINATDSCSYVEVRDLASVIGDLDVLYMTRVQKERFFNEDDYLRLRDTYILDEEKLQLAKPSMAVLHPLPRVNEIAVDVDDDPRAAYFEQVKNGMLVRMALESTVVGDELPGYEPLNPKEVQA.

R53 and T54 together coordinate carbamoyl phosphate. K82 is an L-aspartate binding site. Carbamoyl phosphate contacts are provided by R103, H131, and Q134. L-aspartate is bound by residues R164 and R227. Carbamoyl phosphate is bound by residues L266 and P267.

Belongs to the aspartate/ornithine carbamoyltransferase superfamily. ATCase family. As to quaternary structure, heterododecamer (2C3:3R2) of six catalytic PyrB chains organized as two trimers (C3), and six regulatory PyrI chains organized as three dimers (R2).

The catalysed reaction is carbamoyl phosphate + L-aspartate = N-carbamoyl-L-aspartate + phosphate + H(+). It functions in the pathway pyrimidine metabolism; UMP biosynthesis via de novo pathway; (S)-dihydroorotate from bicarbonate: step 2/3. In terms of biological role, catalyzes the condensation of carbamoyl phosphate and aspartate to form carbamoyl aspartate and inorganic phosphate, the committed step in the de novo pyrimidine nucleotide biosynthesis pathway. The sequence is that of Aspartate carbamoyltransferase catalytic subunit from Bifidobacterium longum (strain NCC 2705).